We begin with the raw amino-acid sequence, 114 residues long: uncharacterized protein (114 aa).

An HIT domain is found at 6 to 114 (IFGKIIRREI…GGRSLAWPPG (109 aa)). A Histidine triad motif motif is present at residues 98–102 (HLHIH).

This is an uncharacterized protein from Synechococcus elongatus (strain ATCC 33912 / PCC 7942 / FACHB-805) (Anacystis nidulans R2).